An 81-amino-acid polypeptide reads, in one-letter code: Apolipoprotein C-I, acidic form (81 aa).

The first 24 residues, 1-24, serve as a signal peptide directing secretion; sequence MRLFLSLLVVVLSIVLEGPTPAQG.

The protein belongs to the apolipoprotein C1 family.

It localises to the secreted. The polypeptide is Apolipoprotein C-I, acidic form (APOC1A) (Theropithecus gelada (Gelada baboon)).